Consider the following 493-residue polypeptide: MNHILAIDQGTTSSRAMVFDEALTLKSVAQEEFPQIYPRPGWVEHDPSDLWSSVAATARAAVERAEIDGSLAAIGITNQRETVVVWERASGHPIHNAIVWQDRRTADLCHALAEAGHEPTITERTGLLLDPYFSATKLKWLLDHVEGARARARRGELLFGTVDSYLIWKLTGGRAHVTDATNAARTMLFDIGRGIWDPEICGLLDIPMEMLPEVRDCAAPFGMTRADLFGREIPILGVAGDQQAATCGQACFRPGMMKSTYGTGCFALLNTGEERVTSRARLLTTIAYQLGGKRTYALEGSIFIAGAVVQWLRDGLKIIREAGETQGLALSSDAAQDLVIVPAFTGLGAPWWKPESRGAVFGLTRNSGPAEFARAALESVGYQTRDLLEAMRADWAAGAEGVLRVDGGMAASDWSLQFLADIIGAPVDRPVVRETTALGVAWLAGMQAGLCPGPEEFAADWALERRFEPQMEASVREAKYDRWGRAVRAVMAV.

Threonine 11 contacts ADP. ATP-binding residues include threonine 11, threonine 12, and serine 13. Threonine 11 is a binding site for sn-glycerol 3-phosphate. ADP is bound at residue arginine 15. Residues arginine 80, glutamate 81, tyrosine 132, and aspartate 241 each coordinate sn-glycerol 3-phosphate. Glycerol contacts are provided by arginine 80, glutamate 81, tyrosine 132, aspartate 241, and glutamine 242. ADP-binding residues include threonine 263 and glycine 306. Positions 263, 306, 310, and 408 each coordinate ATP. Glycine 408 serves as a coordination point for ADP.

It belongs to the FGGY kinase family.

The enzyme catalyses glycerol + ATP = sn-glycerol 3-phosphate + ADP + H(+). It functions in the pathway polyol metabolism; glycerol degradation via glycerol kinase pathway; sn-glycerol 3-phosphate from glycerol: step 1/1. Inhibited by fructose 1,6-bisphosphate (FBP). Key enzyme in the regulation of glycerol uptake and metabolism. Catalyzes the phosphorylation of glycerol to yield sn-glycerol 3-phosphate. The protein is Glycerol kinase of Cereibacter sphaeroides (strain ATCC 17023 / DSM 158 / JCM 6121 / CCUG 31486 / LMG 2827 / NBRC 12203 / NCIMB 8253 / ATH 2.4.1.) (Rhodobacter sphaeroides).